Reading from the N-terminus, the 441-residue chain is uncharacterized protein (441 aa).

It belongs to the outer membrane factor (OMF) (TC 1.B.17) family.

This is an uncharacterized protein from Haemophilus influenzae (strain ATCC 51907 / DSM 11121 / KW20 / Rd).